Reading from the N-terminus, the 485-residue chain is MPATETADKNTKSANSDTSGRVVRVTGPVVDVEFPRGSVPALFNALHAEITFEELAKTLTLEVAQHLGDNLVRTISLQPTDGLVRGVEVIDTGRSISVPVGQEVKGHVFNALGHCLDKPGYGEDFEHWSIHRKPPPFEELEPRTEMLETGLKVVDLLTPYVRGGKIALFGGAGVGKTVLIQEMINRIARNFGGTSVFAGVGERTREGNDLWVELQEANVLKDTALVFGQMDEPPGTRMRVALSALTMAEWFRDEAGQDVLLFIDNIFRFTQAGSEVSTLLGRMPSAVGYQPTLADEMGELQERITSTRGRSITSMQAVYVPADDYTDPAPATTFAHLDATTELSRSVFSKGIFPAVDPLASSSTILDPGVVGEEHYRVAQEVIRILQRYKDLQDIIAILGIDELSEEDKQLVNRARRIERFLSQNMMAAEQFTGQPGSTVPLKETIEAFDRLTKGEFDHVPEQAFFLIGGLDDLAKKAESLGAKL.

Positions 1–11 are enriched in basic and acidic residues; it reads MPATETADKNT. Residues 1–20 form a disordered region; sequence MPATETADKNTKSANSDTSG. 170–177 contributes to the ATP binding site; the sequence is GGAGVGKT.

This sequence belongs to the ATPase alpha/beta chains family. As to quaternary structure, F-type ATPases have 2 components, CF(1) - the catalytic core - and CF(0) - the membrane proton channel. CF(1) has five subunits: alpha(3), beta(3), gamma(1), delta(1), epsilon(1). CF(0) has three main subunits: a(1), b(2) and c(9-12). The alpha and beta chains form an alternating ring which encloses part of the gamma chain. CF(1) is attached to CF(0) by a central stalk formed by the gamma and epsilon chains, while a peripheral stalk is formed by the delta and b chains.

The protein localises to the cell membrane. It catalyses the reaction ATP + H2O + 4 H(+)(in) = ADP + phosphate + 5 H(+)(out). Its function is as follows. Produces ATP from ADP in the presence of a proton gradient across the membrane. The catalytic sites are hosted primarily by the beta subunits. This is ATP synthase subunit beta from Mycobacterium avium (strain 104).